We begin with the raw amino-acid sequence, 259 residues long: Chymotrypsin-1 (259 aa).

An N-terminal signal peptide occupies residues 1 to 17; it reads MLRKVFAVVSVLLVVSA. A propeptide spans 18–32 (activation peptide); the sequence is AKVTKLVLDDNYVNR. Positions 33-255 constitute a Peptidase S1 domain; the sequence is VVGGEVAKNG…YHDWVRTTMA (223 aa). Residues Cys59 and Cys75 are joined by a disulfide bond. Catalysis depends on charge relay system residues His74 and Asp119. Cystine bridges form between Cys182-Cys198 and Cys208-Cys232. Ser212 functions as the Charge relay system in the catalytic mechanism.

Belongs to the peptidase S1 family. As to expression, after blood feeding, expression is induced in the midgut epithelium, followed by secretion into the midgut lumen.

It is found in the secreted. It carries out the reaction Preferential cleavage: Tyr-|-Xaa, Trp-|-Xaa, Phe-|-Xaa, Leu-|-Xaa.. The polypeptide is Chymotrypsin-1 (CHYM1) (Anopheles gambiae (African malaria mosquito)).